Here is a 126-residue protein sequence, read N- to C-terminus: Fluoride-specific ion channel FluC (126 aa).

Helical transmembrane passes span 4-24 (LLLV…TSAW), 36-56 (GTLL…TASL), 67-85 (LFLA…SFNY), and 101-121 (AYLL…TLLV). Residues Gly75 and Thr78 each coordinate Na(+).

Belongs to the fluoride channel Fluc/FEX (TC 1.A.43) family.

Its subcellular location is the cell inner membrane. The enzyme catalyses fluoride(in) = fluoride(out). Its activity is regulated as follows. Na(+) is not transported, but it plays an essential structural role and its presence is essential for fluoride channel function. Its function is as follows. Fluoride-specific ion channel. Important for reducing fluoride concentration in the cell, thus reducing its toxicity. The protein is Fluoride-specific ion channel FluC of Anaeromyxobacter dehalogenans (strain 2CP-1 / ATCC BAA-258).